The following is a 44-amino-acid chain: ESGNSCYIYHGVSGICKASCAEDEKAMAGMGVCEGHLCCYKTPW.

Intrachain disulfides connect C6-C38, C16-C33, and C20-C39. Residues 7 to 10 (YIYH) form an inhibitory motif region.

It belongs to the sea anemone alpha-amylase inhibitor family.

It localises to the secreted. Functionally, specific pancreatic alpha-amylase (AMY2A) inhibitor. The recombinant peptide inhibits human pancreatic (Ki=0.01 nM) and porcine pancreatic alpha-amylases (Ki=0.1 nM). The polypeptide is Alpha-amylase inhibitor helianthamide (Stichodactyla helianthus (Sun anemone)).